We begin with the raw amino-acid sequence, 847 residues long: Matrin-3 (847 aa).

Ser2 is modified (N-acetylserine). Residue Lys3 is modified to N6-acetyllysine; alternate. Lys3 is covalently cross-linked (Glycyl lysine isopeptide (Lys-Gly) (interchain with G-Cter in SUMO2); alternate). Phosphoserine is present on residues Ser4, Ser9, Ser11, Ser14, Ser22, Ser41, Ser118, and Ser126. Glycyl lysine isopeptide (Lys-Gly) (interchain with G-Cter in SUMO2) cross-links involve residues Lys132 and Lys146. Disordered stretches follow at residues 146–174 and 187–214; these read KRRR…YRVP and DSFD…SGYY. Thr150 is subject to Phosphothreonine. Phosphoserine is present on Ser157. A Phosphotyrosine modification is found at Tyr158. Residues 160–174 are compositionally biased toward basic and acidic residues; sequence RDGRSATREPPYRVP. 3 positions are modified to phosphoserine: Ser164, Ser188, and Ser195. Residues 201 to 214 are compositionally biased toward basic and acidic residues; sequence DYDHGSRSQESGYY. Tyr202 carries the post-translational modification Phosphotyrosine. Residues Ser206, Ser208, and Ser211 each carry the phosphoserine modification. Tyr219 bears the Phosphotyrosine mark. A Phosphoserine modification is found at Ser234. Lys245 is covalently cross-linked (Glycyl lysine isopeptide (Lys-Gly) (interchain with G-Cter in SUMO2)). Ser264 is subject to Phosphoserine. Lys269 participates in a covalent cross-link: Glycyl lysine isopeptide (Lys-Gly) (interchain with G-Cter in SUMO2). Ser275 carries the post-translational modification Phosphoserine. The disordered stretch occupies residues 342-394; the sequence is PFMLQQSTNPAPGILGPPPPSFHLGGPAVGPRGNLGAGNGNLQGPRHMQKGRV. Residues 398–473 form the RRM 1 domain; that stretch reads RVVHIMDFQR…KPVRVHLSQK (76 aa). Glycyl lysine isopeptide (Lys-Gly) (interchain with G-Cter in SUMO2) cross-links involve residues Lys478, Lys487, and Lys491. The 76-residue stretch at 496–571 folds into the RRM 2 domain; the sequence is RVIHLSNLPH…RCVKVDLSEK (76 aa). Phosphoserine occurs at positions 509 and 511. Lys515 is covalently cross-linked (Glycyl lysine isopeptide (Lys-Gly) (interchain with G-Cter in SUMO2)). N6-acetyllysine; alternate is present on Lys522. Residue Lys522 forms a Glycyl lysine isopeptide (Lys-Gly) (interchain with G-Cter in SUMO2); alternate linkage. Residue Ser533 is modified to Phosphoserine. Glycyl lysine isopeptide (Lys-Gly) (interchain with G-Cter in SUMO2) cross-links involve residues Lys554 and Lys555. N6-acetyllysine is present on Lys571. Residues 588 to 786 form a disordered region; the sequence is KKDKSRKRSY…DEYRIGPYQP (199 aa). Ser596, Ser598, Ser604, and Ser606 each carry phosphoserine. Over residues 600 to 643 the composition is skewed to basic and acidic residues; that stretch reads DGKESPSDKKSKTDGSQKTESSTEGKEQEEKSGEDGEKDTKDDQ. Residues Lys617 and Lys630 each participate in a glycyl lysine isopeptide (Lys-Gly) (interchain with G-Cter in SUMO2) cross-link. Residues 653–665 are compositionally biased toward acidic residues; sequence ESEDELLVDEEEA. Phosphoserine occurs at positions 654, 671, 673, and 674. Low complexity predominate over residues 666-676; the sequence is AALLESGSSVG. Thr679 carries the phosphothreonine modification. Ser689 is modified (phosphoserine). Residues 689 to 704 are compositionally biased toward basic and acidic residues; that stretch reads SDGKKEPSDKAVKKDG. The Nuclear localization signal motif lies at 710-718; sequence AKKKLKKVD. Residues Lys719 and Lys736 each participate in a glycyl lysine isopeptide (Lys-Gly) (interchain with G-Cter in SUMO2) cross-link. Position 741 is a phosphothreonine (Thr741). Residues Ser747, Ser759, and Ser766 each carry the phosphoserine modification. Over residues 767 to 780 the composition is skewed to basic and acidic residues; it reads DENKDDYTIPDEYR. Lys770 participates in a covalent cross-link: Glycyl lysine isopeptide (Lys-Gly) (interchain with G-Cter in SUMO2). The Matrin-type zinc finger occupies 801–832; it reads FYCKLCSLFYTNEEVAKNTHCSSLPHYQKLKK. The residue at position 836 (Lys836) is an N6-acetyllysine; alternate. Lys836 is covalently cross-linked (Glycyl lysine isopeptide (Lys-Gly) (interchain with G-Cter in SUMO2); alternate).

As to quaternary structure, part of a complex consisting of SFPQ, NONO and MATR3. Interacts with AGO1 and AGO2. Part of a complex composed at least of ASH2L, EMSY, HCFC1, HSPA8, CCAR2, MATR3, MKI67, RBBP5, TUBB2A, WDR5 and ZNF335; this complex may have a histone H3-specific methyltransferase activity. Interacts with TARDBP. Part of the HDP-RNP complex composed of at least HEXIM1, PRKDC, XRCC5, XRCC6, paraspeckle proteins (SFPQ, NONO, PSPC1, RBM14, and MATR3) and NEAT1 RNA. Interacts with FUS. Interacts with IGF2BP1; the interaction is enhanced by SEPIN14P20 peptide RBPR. Interacts with IGF2BP2 and IGF2BP3. Interacts with RBPMS.

The protein localises to the nucleus matrix. Its function is as follows. May play a role in transcription or may interact with other nuclear matrix proteins to form the internal fibrogranular network. In association with the SFPQ-NONO heteromer may play a role in nuclear retention of defective RNAs. Plays a role in the regulation of DNA virus-mediated innate immune response by assembling into the HDP-RNP complex, a complex that serves as a platform for IRF3 phosphorylation and subsequent innate immune response activation through the cGAS-STING pathway. Binds to N6-methyladenosine (m6A)-containing mRNAs and contributes to MYC stability by binding to m6A-containing MYC mRNAs. May bind to specific miRNA hairpins. The sequence is that of Matrin-3 (MATR3) from Homo sapiens (Human).